The sequence spans 325 residues: Probable arylamine N-acetyltransferase 1 (325 aa).

C72 acts as the Acyl-thioester intermediate in catalysis. Active-site residues include H112 and D127.

It belongs to the arylamine N-acetyltransferase family.

It catalyses the reaction an arylamine + acetyl-CoA = an N-acetylarylamine + CoA. The chain is Probable arylamine N-acetyltransferase 1 from Dictyostelium discoideum (Social amoeba).